Here is a 660-residue protein sequence, read N- to C-terminus: Kinesin-like protein KIF2A (660 aa).

The interval 1–140 is disordered; the sequence is MVTSLNEDNE…QQELREKRAQ (140 aa). Positions 1 to 171 are globular; that stretch reads MVTSLNEDNE…LDYRPLTTAD (171 aa). The residue at position 48 (S48) is a Phosphoserine. Residues T51 and T70 each carry the phosphothreonine modification. S73 bears the Phosphoserine mark. At K75 the chain carries N6-acetyllysine. The span at 96–106 shows a compositional bias: polar residues; that stretch reads LPEQSSSAQQN. Basic and acidic residues predominate over residues 113–140; that stretch reads CVKEVEKLQEKREKRRLQQQELREKRAQ. Residues 177-507 form the Kinesin motor domain; that stretch reads RICVCVRKRP…LRYANRVKEL (331 aa). 267-274 contributes to the ATP binding site; sequence GQTGSGKT. The stretch at 614 to 653 forms a coiled coil; that stretch reads ATQLEAILEQKIDILTELRDKVKSFRAALQEEEQASKQIN.

Belongs to the TRAFAC class myosin-kinesin ATPase superfamily. Kinesin family. MCAK/KIF2 subfamily. In terms of assembly, interacts with AURKA and PLK1. Interacts with PSRC1. Interacts with MCRS1; the interaction enhances recruitment of KIF2A to the minus ends of spindle microtubules which promotes chromosome alignment.

It is found in the cytoplasm. The protein localises to the cytoskeleton. The protein resides in the microtubule organizing center. It localises to the centrosome. Its subcellular location is the spindle pole. It is found in the spindle. Functionally, plus end-directed microtubule-dependent motor required for normal brain development. May regulate microtubule dynamics during axonal growth. Required for normal progression through mitosis. Required for normal congress of chromosomes at the metaphase plate. Required for normal spindle dynamics during mitosis. Promotes spindle turnover. Implicated in formation of bipolar mitotic spindles. Has microtubule depolymerization activity. The polypeptide is Kinesin-like protein KIF2A (KIF2A) (Bos taurus (Bovine)).